The chain runs to 277 residues: Release factor glutamine methyltransferase (277 aa).

Residues 117 to 121 (GTGTG), aspartate 140, tryptophan 168, and asparagine 183 each bind S-adenosyl-L-methionine. A substrate-binding site is contributed by 183-186 (NPPY).

Belongs to the protein N5-glutamine methyltransferase family. PrmC subfamily.

The catalysed reaction is L-glutaminyl-[peptide chain release factor] + S-adenosyl-L-methionine = N(5)-methyl-L-glutaminyl-[peptide chain release factor] + S-adenosyl-L-homocysteine + H(+). Methylates the class 1 translation termination release factors RF1/PrfA and RF2/PrfB on the glutamine residue of the universally conserved GGQ motif. This Salmonella typhimurium (strain LT2 / SGSC1412 / ATCC 700720) protein is Release factor glutamine methyltransferase.